We begin with the raw amino-acid sequence, 132 residues long: Small ribosomal subunit protein uS8 (132 aa).

This sequence belongs to the universal ribosomal protein uS8 family. As to quaternary structure, part of the 30S ribosomal subunit. Contacts proteins S5 and S12.

One of the primary rRNA binding proteins, it binds directly to 16S rRNA central domain where it helps coordinate assembly of the platform of the 30S subunit. The chain is Small ribosomal subunit protein uS8 from Rhizobium meliloti (strain 1021) (Ensifer meliloti).